The primary structure comprises 805 residues: Leucine--tRNA ligase (805 aa).

Residues 40–51 carry the 'HIGH' region motif; sequence PYPSGSGLHVGH. The 'KMSKS' region motif lies at 576-580; it reads KMSKS. An ATP-binding site is contributed by lysine 579.

This sequence belongs to the class-I aminoacyl-tRNA synthetase family.

Its subcellular location is the cytoplasm. It carries out the reaction tRNA(Leu) + L-leucine + ATP = L-leucyl-tRNA(Leu) + AMP + diphosphate. The chain is Leucine--tRNA ligase from Chlorobium chlorochromatii (strain CaD3).